The sequence spans 289 residues: Pyridoxal kinase PdxY (289 aa).

Residues S9 and 44-45 (TQ) each bind substrate. The ATP site is built by D112, V144, E149, and K182. Residue D221 coordinates substrate.

It belongs to the pyridoxine kinase family. PdxY subfamily. As to quaternary structure, homodimer. The cofactor is Mg(2+).

It catalyses the reaction pyridoxal + ATP = pyridoxal 5'-phosphate + ADP + H(+). The protein operates within cofactor metabolism; pyridoxal 5'-phosphate salvage; pyridoxal 5'-phosphate from pyridoxal: step 1/1. Its function is as follows. Pyridoxal kinase involved in the salvage pathway of pyridoxal 5'-phosphate (PLP). Catalyzes the phosphorylation of pyridoxal to PLP. The sequence is that of Pyridoxal kinase PdxY from Vibrio campbellii (strain ATCC BAA-1116).